A 102-amino-acid chain; its full sequence is ATP-dependent Clp protease adapter protein ClpS (102 aa).

The protein belongs to the ClpS family. Binds to the N-terminal domain of the chaperone ClpA.

Its function is as follows. Involved in the modulation of the specificity of the ClpAP-mediated ATP-dependent protein degradation. This Shewanella piezotolerans (strain WP3 / JCM 13877) protein is ATP-dependent Clp protease adapter protein ClpS.